A 442-amino-acid chain; its full sequence is ATP-dependent protease ATPase subunit HslU (442 aa).

ATP contacts are provided by residues Ile18, Gly60–Glu65, Asp255, Glu320, and Arg392.

It belongs to the ClpX chaperone family. HslU subfamily. As to quaternary structure, a double ring-shaped homohexamer of HslV is capped on each side by a ring-shaped HslU homohexamer. The assembly of the HslU/HslV complex is dependent on binding of ATP.

Its subcellular location is the cytoplasm. Functionally, ATPase subunit of a proteasome-like degradation complex; this subunit has chaperone activity. The binding of ATP and its subsequent hydrolysis by HslU are essential for unfolding of protein substrates subsequently hydrolyzed by HslV. HslU recognizes the N-terminal part of its protein substrates and unfolds these before they are guided to HslV for hydrolysis. This chain is ATP-dependent protease ATPase subunit HslU, found in Shewanella sp. (strain W3-18-1).